The sequence spans 318 residues: Pantothenate kinase (318 aa).

96–103 (GSVAVGKS) is a binding site for ATP.

The protein belongs to the prokaryotic pantothenate kinase family.

Its subcellular location is the cytoplasm. The catalysed reaction is (R)-pantothenate + ATP = (R)-4'-phosphopantothenate + ADP + H(+). It participates in cofactor biosynthesis; coenzyme A biosynthesis; CoA from (R)-pantothenate: step 1/5. The polypeptide is Pantothenate kinase (Bradyrhizobium diazoefficiens (strain JCM 10833 / BCRC 13528 / IAM 13628 / NBRC 14792 / USDA 110)).